A 907-amino-acid polypeptide reads, in one-letter code: Schlafen family member 13 (907 aa).

Residues 1–353 are n'-domain region; sequence MEIHPSLVVE…WVRMMVDIGP (353 aa). Residues Glu-205 and Glu-210 contribute to the active site. Residues His-281, Cys-283, and Cys-318 each coordinate Zn(2+). 604–611 provides a ligand contact to ATP; it reads GMPGSGKT.

This sequence belongs to the Schlafen family. Subgroup III subfamily. It depends on Mg(2+) as a cofactor.

It is found in the cytoplasm. In terms of biological role, endoribonuclease that cleaves tRNAs and rRNAs. Cleaves tRNAs 11 nucleotides from the 3'-terminus at the acceptor stem. Does not act on tRNA(Sec). The sequence is that of Schlafen family member 13 from Rattus norvegicus (Rat).